The chain runs to 463 residues: Asparagine--tRNA ligase (463 aa).

The protein belongs to the class-II aminoacyl-tRNA synthetase family. In terms of assembly, homodimer.

The protein resides in the cytoplasm. It carries out the reaction tRNA(Asn) + L-asparagine + ATP = L-asparaginyl-tRNA(Asn) + AMP + diphosphate + H(+). This Bacillus thuringiensis subsp. konkukian (strain 97-27) protein is Asparagine--tRNA ligase.